Consider the following 615-residue polypeptide: RNA polymerase sigma factor RpoD (615 aa).

The segment at 166–216 (GYIDPDDGITPPAAEVPPPVDTKTAKADDDSEDEEAEATEDEEEAESGPDP) is disordered. A compositionally biased stretch (acidic residues) spans 194 to 212 (DDSEDEEAEATEDEEEAES). Residues 381–451 (MVEANLRLVI…TRSIADQART (71 aa)) are sigma-70 factor domain-2. Residues 405–408 (DLIQ) carry the Interaction with polymerase core subunit RpoC motif. The segment at 460–536 (ETINKLNRIS…DSTMQSPIDV (77 aa)) is sigma-70 factor domain-3. Residues 549–602 (VLSGLTAREAKVLRMRFGIDMNTDHTLEEVGKQFDVTRERIRQIEAKALRKLRH) are sigma-70 factor domain-4. Positions 575–594 (LEEVGKQFDVTRERIRQIEA) form a DNA-binding region, H-T-H motif.

Belongs to the sigma-70 factor family. RpoD/SigA subfamily. Interacts transiently with the RNA polymerase catalytic core.

Its subcellular location is the cytoplasm. In terms of biological role, sigma factors are initiation factors that promote the attachment of RNA polymerase to specific initiation sites and are then released. This sigma factor is the primary sigma factor during exponential growth. The protein is RNA polymerase sigma factor RpoD of Pseudomonas protegens (strain DSM 19095 / LMG 27888 / CFBP 6595 / CHA0).